The primary structure comprises 153 residues: Ribosome maturation factor RimP (153 aa).

Belongs to the RimP family.

It localises to the cytoplasm. In terms of biological role, required for maturation of 30S ribosomal subunits. The protein is Ribosome maturation factor RimP of Clostridium botulinum (strain Okra / Type B1).